The following is a 146-amino-acid chain: MGRFISISFGLLVVFLSLSGTEAAFCCPSGWSAYDQNCYKVFTEEMNWADAEKFCTEQKKGSHLVSLHSREEEKFVVNLISENLEYPATWIGLGNMWKDCRMEWSDRGNVKYKALAEESYCLIMITHEKVWKSMTCNFIAPVVCKF.

An N-terminal signal peptide occupies residues 1-23 (MGRFISISFGLLVVFLSLSGTEA). Cystine bridges form between cysteine 27-cysteine 38, cysteine 55-cysteine 144, and cysteine 121-cysteine 136. Residues 34 to 145 (YDQNCYKVFT…CNFIAPVVCK (112 aa)) form the C-type lectin domain.

The protein belongs to the snaclec family. Heterodimer; disulfide-linked.

It localises to the secreted. In terms of biological role, interferes with one step of hemostasis (modulation of platelet aggregation, or coagulation cascade, for example). This Daboia siamensis (Eastern Russel's viper) protein is Snaclec 4.